We begin with the raw amino-acid sequence, 390 residues long: Transforming growth factor beta-1 proprotein (390 aa).

The first 29 residues, 1-29 (MPPSGLRLLPLLLPLLWLLVLTPGRPAAG), serve as a signal peptide directing secretion. Residues 30–74 (LSTCKTIDMELVKRKRIEAIRGQILSKLRLASPPSQGDVPPGPLP) are straightjacket domain. The arm domain stretch occupies residues 75–271 (EAVLALYNST…ATPLERAQHL (197 aa)). N-linked (GlcNAc...) asparagine glycans are attached at residues N82, N136, and N176. The tract at residues 226-252 (DSKDNTLHVEINGFNSGRRGDLATIHG) is bowtie tail. The short motif at 244-246 (RGD) is the Cell attachment site element. 4 disulfide bridges follow: C285-C294, C293-C356, C322-C387, and C326-C389.

The protein belongs to the TGF-beta family. In terms of assembly, homodimer; disulfide-linked. Interacts with the serine proteases, HTRA1 and HTRA3: the interaction with either inhibits TGFB1-mediated signaling and the HTRA protease activity is required for this inhibition. May interact with THSD4; this interaction may lead to sequestration by FBN1 microfibril assembly and attenuation of TGFB signaling. Interacts with CD109, DPT and ASPN. Interacts with EFEMP2. Interacts with TSKU; the interaction contributes to regulation of the hair cycle. Interacts with TGFBR3. Homodimer; disulfide-linked. Interacts with transforming growth factor beta-1 (TGF-beta-1) chain; interaction is non-covalent and maintains TGF-beta-1 in a latent state; each latency-associated peptide (LAP) monomer interacts with TGF-beta-1 in the other monomer. Interacts with LTBP1; leading to regulation of TGF-beta-1 activation. Interacts with LRRC32/GARP; leading to regulation of TGF-beta-1 activation on the surface of activated regulatory T-cells (Tregs). Interacts with LRRC33/NRROS; leading to regulation of TGF-beta-1 activation in macrophages and microglia. Interacts (via cell attachment site) with integrins ITGAV and ITGB6 (ITGAV:ITGB6), leading to release of the active TGF-beta-1. Interacts with NREP; the interaction results in a decrease in TGFB1 autoinduction. Interacts with HSP90AB1; inhibits latent TGFB1 activation. As to quaternary structure, homodimer; disulfide-linked. Interacts with TGF-beta receptors (TGFBR1 and TGFBR2), leading to signal transduction. In terms of processing, transforming growth factor beta-1 proprotein: The precursor proprotein is cleaved in the Golgi apparatus by FURIN to form Transforming growth factor beta-1 (TGF-beta-1) and Latency-associated peptide (LAP) chains, which remain non-covalently linked, rendering TGF-beta-1 inactive. Post-translationally, N-glycosylated. Deglycosylation leads to activation of Transforming growth factor beta-1 (TGF-beta-1); mechanisms triggering deglycosylation-driven activation of TGF-beta-1 are however unclear.

It localises to the secreted. The protein resides in the extracellular space. The protein localises to the extracellular matrix. Transforming growth factor beta-1 proprotein: Precursor of the Latency-associated peptide (LAP) and Transforming growth factor beta-1 (TGF-beta-1) chains, which constitute the regulatory and active subunit of TGF-beta-1, respectively. Functionally, required to maintain the Transforming growth factor beta-1 (TGF-beta-1) chain in a latent state during storage in extracellular matrix. Associates non-covalently with TGF-beta-1 and regulates its activation via interaction with 'milieu molecules', such as LTBP1, LRRC32/GARP and LRRC33/NRROS, that control activation of TGF-beta-1. Interaction with LRRC33/NRROS regulates activation of TGF-beta-1 in macrophages and microglia. Interaction with LRRC32/GARP controls activation of TGF-beta-1 on the surface of activated regulatory T-cells (Tregs). Interaction with integrins (ITGAV:ITGB6 or ITGAV:ITGB8) results in distortion of the Latency-associated peptide chain and subsequent release of the active TGF-beta-1. Its function is as follows. Multifunctional protein that regulates the growth and differentiation of various cell types and is involved in various processes, such as normal development, immune function, microglia function and responses to neurodegeneration. Activation into mature form follows different steps: following cleavage of the proprotein in the Golgi apparatus, Latency-associated peptide (LAP) and Transforming growth factor beta-1 (TGF-beta-1) chains remain non-covalently linked rendering TGF-beta-1 inactive during storage in extracellular matrix. At the same time, LAP chain interacts with 'milieu molecules', such as LTBP1, LRRC32/GARP and LRRC33/NRROS that control activation of TGF-beta-1 and maintain it in a latent state during storage in extracellular milieus. TGF-beta-1 is released from LAP by integrins (ITGAV:ITGB6 or ITGAV:ITGB8): integrin-binding to LAP stabilizes an alternative conformation of the LAP bowtie tail and results in distortion of the LAP chain and subsequent release of the active TGF-beta-1. Once activated following release of LAP, TGF-beta-1 acts by binding to TGF-beta receptors (TGFBR1 and TGFBR2), which transduce signal. While expressed by many cells types, TGF-beta-1 only has a very localized range of action within cell environment thanks to fine regulation of its activation by Latency-associated peptide chain (LAP) and 'milieu molecules'. Plays an important role in bone remodeling: acts as a potent stimulator of osteoblastic bone formation, causing chemotaxis, proliferation and differentiation in committed osteoblasts. Can promote either T-helper 17 cells (Th17) or regulatory T-cells (Treg) lineage differentiation in a concentration-dependent manner. At high concentrations, leads to FOXP3-mediated suppression of RORC and down-regulation of IL-17 expression, favoring Treg cell development. At low concentrations in concert with IL-6 and IL-21, leads to expression of the IL-17 and IL-23 receptors, favoring differentiation to Th17 cells. Stimulates sustained production of collagen through the activation of CREB3L1 by regulated intramembrane proteolysis (RIP). Mediates SMAD2/3 activation by inducing its phosphorylation and subsequent translocation to the nucleus. Positively regulates odontoblastic differentiation in dental papilla cells, via promotion of IPO7-mediated translocation of phosphorylated SMAD2 to the nucleus and subsequent transcription of target genes. Can induce epithelial-to-mesenchymal transition (EMT) and cell migration in various cell types. In Sus scrofa (Pig), this protein is Transforming growth factor beta-1 proprotein (TGFB1).